A 109-amino-acid polypeptide reads, in one-letter code: Sperm-specific class P protein 10 (109 aa).

Residues 2 to 109 enclose the MSP domain; it reads SLTADPPACT…TVTIPMSATA (108 aa).

Expressed at higher level in testis.

This chain is Sperm-specific class P protein 10 (ssp-10), found in Caenorhabditis elegans.